The sequence spans 169 residues: Disulfide bond formation protein B (169 aa).

The Cytoplasmic portion of the chain corresponds to 1–14 (MNNLTLSLRRERRL). The helical transmembrane segment at 15 to 31 (LVLLALVCLALLAGALY) threads the bilayer. Over 32-49 (LQYVKNEDPCPLCIIQRY) the chain is Periplasmic. A disulfide bridge links Cys-41 with Cys-44. Residues 50 to 64 (FFVLIAVFAFIGAGM) form a helical membrane-spanning segment. Residues 65–71 (ASGAGVA) lie on the Cytoplasmic side of the membrane. Residues 72-89 (VTEALIVLSAAAGVGTAA) form a helical membrane-spanning segment. Residues 90–144 (RHLYVQLNPGFSCGFDALQPVVDSLPPARWLPGVFKVAGLCETVYPPIFGILLPG) lie on the Periplasmic side of the membrane. A disulfide bridge links Cys-102 with Cys-130. A helical membrane pass occupies residues 145–163 (WALIAFVLIAVPVAVSLLR). At 164–169 (HRGRLR) the chain is on the cytoplasmic side.

This sequence belongs to the DsbB family.

It localises to the cell inner membrane. Functionally, required for disulfide bond formation in some periplasmic proteins. Acts by oxidizing the DsbA protein. In Burkholderia mallei (strain ATCC 23344), this protein is Disulfide bond formation protein B.